We begin with the raw amino-acid sequence, 190 residues long: Ribosome maturation factor RimM (190 aa).

A PRC barrel domain is found at 95–171 (DPDEFYDHEL…VVMIEPPEGL (77 aa)). The disordered stretch occupies residues 169-190 (EGLLDPDFGDKSNSDNSNSDND).

This sequence belongs to the RimM family. Binds ribosomal protein uS19.

The protein resides in the cytoplasm. In terms of biological role, an accessory protein needed during the final step in the assembly of 30S ribosomal subunit, possibly for assembly of the head region. Essential for efficient processing of 16S rRNA. May be needed both before and after RbfA during the maturation of 16S rRNA. It has affinity for free ribosomal 30S subunits but not for 70S ribosomes. This chain is Ribosome maturation factor RimM, found in Rhodococcus erythropolis (strain PR4 / NBRC 100887).